We begin with the raw amino-acid sequence, 204 residues long: MTEKLKQGIDQLGLKVAETIQQSMLAFLAFLQKWNQAYNLTAITEIKSMITHHLLDSLSILPYLKGDKILDVGSGAGFPGIPLAFACPEKKFTLIDSKAKKTAFLLQAASRFKITNVTIIQERVGSYQPGFYFDTITCRALGSVREIMEQTNHLLRSGGQWLIMKGTYPEKELRGTDASAIVHVLNVPGLKAERHLVEVKNNKG.

Positions 73, 78, and 139 each coordinate S-adenosyl-L-methionine.

The protein belongs to the methyltransferase superfamily. RNA methyltransferase RsmG family.

It is found in the cytoplasm. The enzyme catalyses guanosine(527) in 16S rRNA + S-adenosyl-L-methionine = N(7)-methylguanosine(527) in 16S rRNA + S-adenosyl-L-homocysteine. Specifically methylates the N7 position of guanine in position 527 of 16S rRNA. The protein is Ribosomal RNA small subunit methyltransferase G of Coxiella burnetii (strain CbuG_Q212) (Coxiella burnetii (strain Q212)).